The chain runs to 448 residues: Tryptophan dimethylallyltransferase 1 (448 aa).

L-tryptophan is bound by residues 80 to 81 (IL) and E89. Positions 100, 186, and 188 each coordinate substrate. 2 residues coordinate L-tryptophan: Y190 and R249. The substrate site is built by R262, K264, Y266, Q348, Y350, Y414, and Y418.

Belongs to the tryptophan dimethylallyltransferase family. In terms of assembly, homodimer.

It catalyses the reaction L-tryptophan + dimethylallyl diphosphate = 4-(3-methylbut-2-enyl)-L-tryptophan + diphosphate. It functions in the pathway alkaloid biosynthesis; ergot alkaloid biosynthesis. Its function is as follows. Tryptophan dimethylallyltransferase; part of the gene cluster that mediates the biosynthesis of fungal ergot alkaloid. DmaW catalyzes the first step of ergot alkaloid biosynthesis by condensing dimethylallyl diphosphate (DMAP) and tryptophan to form 4-dimethylallyl-L-tryptophan. The second step is catalyzed by the methyltransferase easF that methylates 4-dimethylallyl-L-tryptophan in the presence of S-adenosyl-L-methionine, resulting in the formation of 4-dimethylallyl-L-abrine. The catalase easC and the FAD-dependent oxidoreductase easE then transform 4-dimethylallyl-L-abrine to chanoclavine-I which is further oxidized by easD in the presence of NAD(+), resulting in the formation of chanoclavine-I aldehyde. Agroclavine dehydrogenase easG then mediates the conversion of chanoclavine-I aldehyde to agroclavine via a non-enzymatic adduct reaction: the substrate is an iminium intermediate that is formed spontaneously from chanoclavine-I aldehyde in the presence of glutathione. The presence of easA is not required to complete this reaction. Further conversion of agroclavine to paspalic acid is a two-step process involving oxidation of agroclavine to elymoclavine and of elymoclavine to paspalic acid, the second step being performed by the elymoclavine oxidase cloA. Paspalic acid is then further converted to D-lysergic acid. Ergopeptines are assembled from D-lysergic acid and three different amino acids by the D-lysergyl-peptide-synthetases composed each of a monomudular and a trimodular nonribosomal peptide synthetase subunit. LpsB and lpsC encode the monomodular subunits responsible for D-lysergic acid activation and incorporation into the ergopeptine backbone. LpsA1 and A2 subunits encode the trimodular nonribosomal peptide synthetase assembling the tripeptide portion of ergopeptines. LpsA1 is responsible for formation of the major ergopeptine, ergotamine, and lpsA2 for alpha-ergocryptine, the minor ergopeptine of the total alkaloid mixture elaborated by C.purpurea. D-lysergyl-tripeptides are assembled by the nonribosomal peptide synthetases and released as N-(D-lysergyl-aminoacyl)-lactams. Cyclolization of the D-lysergyl-tripeptides is performed by the Fe(2+)/2-ketoglutarate-dependent dioxygenase easH which introduces a hydroxyl group into N-(D-lysergyl-aminoacyl)-lactam at alpha-C of the aminoacyl residue followed by spontaneous condensation with the terminal lactam carbonyl group. The protein is Tryptophan dimethylallyltransferase 1 of Claviceps purpurea (Ergot fungus).